The chain runs to 284 residues: Steroidogenic acute regulatory protein, mitochondrial (284 aa).

A mitochondrion-targeting transit peptide spans 1–62 (MLLATFKLCA…RRSSLLGSQL (62 aa)). Phosphoserine; by PKA is present on residues Ser-56 and Ser-194. The START domain occupies 66 to 279 (LYSEQELSYI…LRKRLESSSA (214 aa)).

May interact with TSPO.

It is found in the mitochondrion. Its pathway is steroid metabolism; cholesterol metabolism. Plays a key role in steroid hormone synthesis by enhancing the metabolism of cholesterol into pregnenolone. Mediates the transfer of cholesterol from the outer mitochondrial membrane to the inner mitochondrial membrane where it is cleaved to pregnenolone. This Mesocricetus auratus (Golden hamster) protein is Steroidogenic acute regulatory protein, mitochondrial (STAR).